The following is a 602-amino-acid chain: MWATSEGPLQYSLAPTQTDVNSSYNTVPPKLKEMKNQEVAVGQKLVLRCETTSEYPALRFKWLKNGKEITKKNRPENVKIPKKQKKYSELHIYRATLADAGEYACRVSSKLGNDSTKASVIITDTNATSTSTTGTSHLTKCDIKQKAFCVNGGECYMVKDLPNPPRYLCRCPNEFTGDRCQNYVMASFYKHLGIEFMEAEELYQKRVLTITGICIALLVVGIMCVVAYCKTKKQRKKLHDRLRQSLRSERNNVMNMANGPHHPNPPPDNVQLVNQYVSKNIISSERVVERETETSFSTSHYTSTTHHSMTVTQTPSHSWSNGHTESILSESHSVLVSSSVENSRHTSPTGPRGRLNGIGGPREGNSFLRHARETPDSYRDSPHSERYVSAMTTPARMSPVDFHTPTSPKSPPSEMSPPVSSLTISIPSVAVSPFMDEERPLLLVTPPRLREKYDNHLQQFNSFHNNPTHESNSLPPSPLRIVEDEEYETTQEYEPAQEPPKKLTNSRRVKRTKPNGHISSRVEVDSDTSSQSTSSESETEDERIGEDTPFLSIQNPMATSLEPAAAYRLAENRTNPANRFSTPEELQARLSSVIANQDPIAV.

The Extracellular portion of the chain corresponds to 1-206 (MWATSEGPLQ…MEAEELYQKR (206 aa)). N21 is a glycosylation site (N-linked (GlcNAc...) asparagine). Residues 29 to 123 (PKLKEMKNQE…DSTKASVIIT (95 aa)) enclose the Ig-like C2-type domain. C49 and C105 are oxidised to a cystine. N113 and N126 each carry an N-linked (GlcNAc...) asparagine glycan. An EGF-like domain is found at 137-181 (HLTKCDIKQKAFCVNGGECYMVKDLPNPPRYLCRCPNEFTGDRCQ). Cystine bridges form between C141–C155, C149–C169, and C171–C180. A helical transmembrane segment spans residues 207-229 (VLTITGICIALLVVGIMCVVAYC). Residues 230–602 (KTKKQRKKLH…VIANQDPIAV (373 aa)) lie on the Cytoplasmic side of the membrane. Disordered stretches follow at residues 293 to 366 (ETSF…EGNS), 391 to 421 (MTTPARMSPVDFHTPTSPKSPPSEMSPPVSS), 460 to 479 (FNSFHNNPTHESNSLPPSPL), and 486 to 553 (EYET…FLSI). Low complexity predominate over residues 294 to 314 (TSFSTSHYTSTTHHSMTVTQT). Polar residues predominate over residues 315-324 (PSHSWSNGHT). Over residues 325–341 (ESILSESHSVLVSSSVE) the composition is skewed to low complexity. The segment covering 460–474 (FNSFHNNPTHESNSL) has biased composition (polar residues). Basic residues predominate over residues 504-514 (TNSRRVKRTKP). Residues 527–536 (DTSSQSTSSE) are compositionally biased toward low complexity.

The protein belongs to the neuregulin family. In terms of processing, proteolytic cleavage close to the plasma membrane on the external face leads to the release of the soluble growth factor form. Extensive glycosylation precedes the proteolytic cleavage.

The protein localises to the cell membrane. It localises to the secreted. Direct ligand for the ERBB tyrosine kinase receptors. The multiple isoforms perform diverse functions: cysteine-rich domain containing isoforms (isoform 2-isoform 4) probably regulate the expression of nicotinic acetylcholine receptors at developing interneuronal synapses. Isoform Ig-NRG is required for the initial induction and/or maintenance of the mature levels of acetylcholine receptors at neuromuscular synapses. Binds to ERBB3 and integrins to form a complex which is essential for NRG1-ERBB signaling. The sequence is that of Pro-neuregulin-1, membrane-bound isoform (NRG1) from Gallus gallus (Chicken).